The chain runs to 160 residues: Transcription antitermination protein NusB (160 aa).

Belongs to the NusB family.

Involved in transcription antitermination. Required for transcription of ribosomal RNA (rRNA) genes. Binds specifically to the boxA antiterminator sequence of the ribosomal RNA (rrn) operons. The protein is Transcription antitermination protein NusB of Chlamydia pneumoniae (Chlamydophila pneumoniae).